The primary structure comprises 204 residues: Holliday junction branch migration complex subunit RuvA (204 aa).

The interval methionine 1–glycine 67 is domain I. The segment at serine 68 to aspartate 146 is domain II. Residues glutamine 147 to isoleucine 157 are flexible linker. The tract at residues isoleucine 157 to proline 204 is domain III.

This sequence belongs to the RuvA family. As to quaternary structure, homotetramer. Forms an RuvA(8)-RuvB(12)-Holliday junction (HJ) complex. HJ DNA is sandwiched between 2 RuvA tetramers; dsDNA enters through RuvA and exits via RuvB. An RuvB hexamer assembles on each DNA strand where it exits the tetramer. Each RuvB hexamer is contacted by two RuvA subunits (via domain III) on 2 adjacent RuvB subunits; this complex drives branch migration. In the full resolvosome a probable DNA-RuvA(4)-RuvB(12)-RuvC(2) complex forms which resolves the HJ.

Its subcellular location is the cytoplasm. Its function is as follows. The RuvA-RuvB-RuvC complex processes Holliday junction (HJ) DNA during genetic recombination and DNA repair, while the RuvA-RuvB complex plays an important role in the rescue of blocked DNA replication forks via replication fork reversal (RFR). RuvA specifically binds to HJ cruciform DNA, conferring on it an open structure. The RuvB hexamer acts as an ATP-dependent pump, pulling dsDNA into and through the RuvAB complex. HJ branch migration allows RuvC to scan DNA until it finds its consensus sequence, where it cleaves and resolves the cruciform DNA. This chain is Holliday junction branch migration complex subunit RuvA, found in Synechococcus sp. (strain JA-2-3B'a(2-13)) (Cyanobacteria bacterium Yellowstone B-Prime).